A 250-amino-acid chain; its full sequence is NAD-dependent protein deacylase 1 (250 aa).

A Deacetylase sirtuin-type domain is found at 1 to 250 (MRAVVELLAG…PELLRRAFPG (250 aa)). Residue 19 to 39 (GAGVSAESGIPTFRDALGGLW) participates in NAD(+) binding. The substrate site is built by Tyr-64 and Arg-67. 98–101 (QNVD) contacts NAD(+). The active-site Proton acceptor is His-116. Positions 124, 127, 152, and 155 each coordinate Zn(2+). Residues 192-194 (GTS), 218-220 (NPQ), and Ala-236 each bind NAD(+).

This sequence belongs to the sirtuin family. Class III subfamily. The cofactor is Zn(2+).

The protein localises to the cytoplasm. The catalysed reaction is N(6)-acetyl-L-lysyl-[protein] + NAD(+) + H2O = 2''-O-acetyl-ADP-D-ribose + nicotinamide + L-lysyl-[protein]. It catalyses the reaction N(6)-succinyl-L-lysyl-[protein] + NAD(+) + H2O = 2''-O-succinyl-ADP-D-ribose + nicotinamide + L-lysyl-[protein]. NAD-dependent lysine deacetylase and desuccinylase that specifically removes acetyl and succinyl groups on target proteins. Modulates the activities of several proteins which are inactive in their acylated form. This is NAD-dependent protein deacylase 1 from Pseudomonas aeruginosa (strain ATCC 15692 / DSM 22644 / CIP 104116 / JCM 14847 / LMG 12228 / 1C / PRS 101 / PAO1).